The chain runs to 52 residues: Large ribosomal subunit protein eL39 (52 aa).

It belongs to the eukaryotic ribosomal protein eL39 family.

The polypeptide is Large ribosomal subunit protein eL39 (Caldivirga maquilingensis (strain ATCC 700844 / DSM 13496 / JCM 10307 / IC-167)).